The sequence spans 312 residues: tRNA-cytidine(32) 2-sulfurtransferase (312 aa).

The short motif at 47–52 (SGGKDS) is the PP-loop motif element. [4Fe-4S] cluster is bound by residues Cys-122, Cys-125, and Cys-213.

Belongs to the TtcA family. Homodimer. Requires Mg(2+) as cofactor. It depends on [4Fe-4S] cluster as a cofactor.

It localises to the cytoplasm. It carries out the reaction cytidine(32) in tRNA + S-sulfanyl-L-cysteinyl-[cysteine desulfurase] + AH2 + ATP = 2-thiocytidine(32) in tRNA + L-cysteinyl-[cysteine desulfurase] + A + AMP + diphosphate + H(+). It functions in the pathway tRNA modification. Its function is as follows. Catalyzes the ATP-dependent 2-thiolation of cytidine in position 32 of tRNA, to form 2-thiocytidine (s(2)C32). The sulfur atoms are provided by the cysteine/cysteine desulfurase (IscS) system. This chain is tRNA-cytidine(32) 2-sulfurtransferase, found in Actinobacillus succinogenes (strain ATCC 55618 / DSM 22257 / CCUG 43843 / 130Z).